The chain runs to 719 residues: Transcription factor E4F1 (719 aa).

Residues 20–63 (NIITIQTTLGDEDEDIHKCGKCLAEFSALDAFIQHKLSRSCKRT) form a required for ubiquitin ligase activity region. Positions 59-125 (SCKRTQDPQT…SEDESSSPSK (67 aa)) are disordered. The segment covering 98–109 (EKQDAKVASGDK) has biased composition (basic and acidic residues). The interval 128 to 207 (WKLNTEGRYV…GLAFRESGAL (80 aa)) is mediates dimerization and DNA-binding. C2H2-type zinc fingers lie at residues 136–158 (YVCD…MFTH) and 164–186 (FVCE…KRRH). A C2H2-type 3; degenerate zinc finger spans residues 192-216 (YRCNQCGLAFRESGALTRHLKSLTP). 5 C2H2-type zinc fingers span residues 365–387 (YKCP…VKGH), 393–415 (FKCL…METH), 421–443 (YKCG…MRAH), 449–471 (YHCS…HRTH), and 477–499 (YVCQ…IRHH). Residues 505–527 (FKCSKCGRGFAEHGTLNRHLRAK) form a C2H2-type 9; degenerate zinc finger.

It is found in the nucleus. The protein resides in the nucleoplasm. The protein localises to the cytoplasm. It carries out the reaction S-ubiquitinyl-[E2 ubiquitin-conjugating enzyme]-L-cysteine + [acceptor protein]-L-lysine = [E2 ubiquitin-conjugating enzyme]-L-cysteine + N(6)-ubiquitinyl-[acceptor protein]-L-lysine.. The protein operates within protein modification; protein ubiquitination. Its function is as follows. May function as a transcriptional repressor. May also function as a ubiquitin ligase. Functions in cell survival and proliferation through control of the cell cycle. This Danio rerio (Zebrafish) protein is Transcription factor E4F1 (e4f1).